Consider the following 92-residue polypeptide: Small ribosomal subunit protein uS19 (92 aa).

Residues 73–92 (EFSPTRSFRGHAGAKNKGRK) form a disordered region. Basic residues predominate over residues 80 to 92 (FRGHAGAKNKGRK).

Belongs to the universal ribosomal protein uS19 family.

Functionally, protein S19 forms a complex with S13 that binds strongly to the 16S ribosomal RNA. The polypeptide is Small ribosomal subunit protein uS19 (Christiangramia forsetii (strain DSM 17595 / CGMCC 1.15422 / KT0803) (Gramella forsetii)).